The sequence spans 427 residues: Enolase (427 aa).

Glutamine 163 contacts (2R)-2-phosphoglycerate. Glutamate 205 serves as the catalytic Proton donor. 3 residues coordinate Mg(2+): aspartate 242, glutamate 285, and aspartate 312. 4 residues coordinate (2R)-2-phosphoglycerate: lysine 337, arginine 366, serine 367, and lysine 388. Lysine 337 serves as the catalytic Proton acceptor.

The protein belongs to the enolase family. Mg(2+) serves as cofactor.

It localises to the cytoplasm. The protein localises to the secreted. Its subcellular location is the cell surface. The catalysed reaction is (2R)-2-phosphoglycerate = phosphoenolpyruvate + H2O. Its pathway is carbohydrate degradation; glycolysis; pyruvate from D-glyceraldehyde 3-phosphate: step 4/5. Its function is as follows. Catalyzes the reversible conversion of 2-phosphoglycerate (2-PG) into phosphoenolpyruvate (PEP). It is essential for the degradation of carbohydrates via glycolysis. This is Enolase from Paraburkholderia phytofirmans (strain DSM 17436 / LMG 22146 / PsJN) (Burkholderia phytofirmans).